The sequence spans 73 residues: Mu-conotoxin PIIIA (73 aa).

The signal sequence occupies residues 1–19 (MSKLGVLLTICLLLFPITA). Residues 20-49 (LPMDGDQPADRLAERMQDNISSEEHPFEKR) constitute a propeptide that is removed on maturation. Gln50 is subject to Pyrrolidone carboxylic acid. Cystine bridges form between Cys53-Cys65, Cys53-Cys70, Cys54-Cys70, Cys54-Cys71, Cys60-Cys65, and Cys60-Cys71. Pro57 carries the post-translational modification 4-hydroxyproline. At Pro67 the chain carries 4-hydroxyproline. Position 71 is a cysteine amide (Cys71).

This sequence belongs to the conotoxin M superfamily. In terms of processing, 3D-structure of 3 disulfide-bond connectivities isomers is described (PIIIA-1 (C1-C5, C2-C6, C3-C4), PIIIA-2 (C1-C4, C2-C5, C3-C6) and PIIIA-3 (C1-C2, C3-C4, C5-C6)). Only PIIIA-2 contains the cysteine connectivity described as typical for native mu-conotoxins. However, PIIIA-1 is more potent than PIIIA-2, suggesting another possible disulfid connectivity. For this reason, both connectivities have been indicated in features. As to expression, expressed by the venom duct.

Its subcellular location is the secreted. In terms of biological role, mu-conotoxins block voltage-gated sodium channels (Nav). This toxin potently blocks rNav1.4/SCN4A (IC(50)=36-41 nM). It also moderately blocks rNav1.1/SCN1A (IC(50)=120 nM), rNav1.2/SCN2A (IC(50)=620 nM), rNav1.3/SCN3A (IC(50)=3.2 uM), mNav1.6/SCN8A (IC(50)=100 nM). This inhibition is reversible. The block of Nav1.1, Nav1.2, and Nav1.6 is modified when beta-subunits are coexpressed with alpha subunits. Hence, blocks of channels containing the beta-1 and beta-3 subunits are more potent (compared to channels without beta subunits), whereas blocks of channels containing the beta-2 and beta-4 are less potent (compared to channels without beta subunits). In vivo, this peptide causes flaccid paralysis in both mice and fish. This Conus purpurascens (Purple cone) protein is Mu-conotoxin PIIIA.